The chain runs to 585 residues: Protein DENND6B (585 aa).

A compositionally biased stretch (low complexity) spans 1–10; sequence MEVPVGPGPR. The disordered stretch occupies residues 1 to 25; it reads MEVPVGPGPRQAGGGLGATRSSSSG. Residues 43–221 form the uDENN domain; it reads ECVCVVTFDL…IQVRIPSRVD (179 aa). Positions 246–373 constitute a cDENN domain; the sequence is VHELDLFRCF…VKLKKPSRLK (128 aa). In terms of domain architecture, dDENN spans 375 to 499; it reads LDTKPGLYTS…KSPHFDGWYR (125 aa).

The protein belongs to the DENND6 family.

It localises to the recycling endosome. The protein resides in the cytoplasm. In terms of biological role, guanine nucleotide exchange factor (GEF) for RAB14. Also has some, lesser GEF activity towards RAB35. In Mus musculus (Mouse), this protein is Protein DENND6B (Dennd6b).